A 257-amino-acid polypeptide reads, in one-letter code: Zinc transporter ZupT (257 aa).

3 helical membrane passes run 5-25 (LILT…GVLG), 32-52 (VLAF…LMEM), and 61-81 (GMSP…YFGL). Residues Asn-120 and Glu-123 each coordinate Fe(2+). Zn(2+) contacts are provided by Glu-123 and His-148. Fe(2+)-binding residues include Asn-149, Glu-152, and Glu-181. Glu-152 serves as a coordination point for Zn(2+). 3 helical membrane passes run 182–202 (IFGG…IVMA), 203–223 (AIMA…LMPL), and 236–256 (GVLC…TIGI).

Belongs to the ZIP transporter (TC 2.A.5) family. ZupT subfamily.

Its subcellular location is the cell inner membrane. The catalysed reaction is Zn(2+)(in) = Zn(2+)(out). In terms of biological role, mediates zinc uptake. May also transport other divalent cations. This Salmonella arizonae (strain ATCC BAA-731 / CDC346-86 / RSK2980) protein is Zinc transporter ZupT.